Reading from the N-terminus, the 198-residue chain is Recombination protein RecR (198 aa).

The segment at 57–72 (CSICGRLTDDDPCSIC) adopts a C4-type zinc-finger fold. Positions 80–175 (TTILVLEDSR…KVTRLARGLA (96 aa)) constitute a Toprim domain.

It belongs to the RecR family.

Its function is as follows. May play a role in DNA repair. It seems to be involved in an RecBC-independent recombinational process of DNA repair. It may act with RecF and RecO. The protein is Recombination protein RecR of Streptococcus pneumoniae (strain 70585).